The sequence spans 178 residues: Large ribosomal subunit protein uL6 (178 aa).

This sequence belongs to the universal ribosomal protein uL6 family. In terms of assembly, part of the 50S ribosomal subunit.

In terms of biological role, this protein binds to the 23S rRNA, and is important in its secondary structure. It is located near the subunit interface in the base of the L7/L12 stalk, and near the tRNA binding site of the peptidyltransferase center. In Streptococcus mutans serotype c (strain ATCC 700610 / UA159), this protein is Large ribosomal subunit protein uL6.